Consider the following 223-residue polypeptide: Thiamine-phosphate synthase (223 aa).

4-amino-2-methyl-5-(diphosphooxymethyl)pyrimidine-binding positions include 37 to 41 and D72; that span reads QFREK. 2 residues coordinate Mg(2+): D73 and D92. Residue S110 participates in 4-amino-2-methyl-5-(diphosphooxymethyl)pyrimidine binding. 136 to 138 is a 2-[(2R,5Z)-2-carboxy-4-methylthiazol-5(2H)-ylidene]ethyl phosphate binding site; that stretch reads TQS. Residue K139 coordinates 4-amino-2-methyl-5-(diphosphooxymethyl)pyrimidine. 2-[(2R,5Z)-2-carboxy-4-methylthiazol-5(2H)-ylidene]ethyl phosphate-binding positions include G168 and 188–189; that span reads IS.

It belongs to the thiamine-phosphate synthase family. Mg(2+) is required as a cofactor.

The enzyme catalyses 2-[(2R,5Z)-2-carboxy-4-methylthiazol-5(2H)-ylidene]ethyl phosphate + 4-amino-2-methyl-5-(diphosphooxymethyl)pyrimidine + 2 H(+) = thiamine phosphate + CO2 + diphosphate. It carries out the reaction 2-(2-carboxy-4-methylthiazol-5-yl)ethyl phosphate + 4-amino-2-methyl-5-(diphosphooxymethyl)pyrimidine + 2 H(+) = thiamine phosphate + CO2 + diphosphate. It catalyses the reaction 4-methyl-5-(2-phosphooxyethyl)-thiazole + 4-amino-2-methyl-5-(diphosphooxymethyl)pyrimidine + H(+) = thiamine phosphate + diphosphate. It participates in cofactor biosynthesis; thiamine diphosphate biosynthesis; thiamine phosphate from 4-amino-2-methyl-5-diphosphomethylpyrimidine and 4-methyl-5-(2-phosphoethyl)-thiazole: step 1/1. Functionally, condenses 4-methyl-5-(beta-hydroxyethyl)thiazole monophosphate (THZ-P) and 2-methyl-4-amino-5-hydroxymethyl pyrimidine pyrophosphate (HMP-PP) to form thiamine monophosphate (TMP). The protein is Thiamine-phosphate synthase of Streptococcus agalactiae serotype III (strain NEM316).